The primary structure comprises 481 residues: Phloretin 4'-O-glucosyltransferase (481 aa).

The Proton acceptor role is filled by H16. H16 is an an anthocyanidin binding site. Residues Q354, H369, W372, N373, S374, E377, D393, and Q394 each contribute to the UDP-alpha-D-glucose site.

This sequence belongs to the UDP-glycosyltransferase family. As to expression, highly expressed in young leaves, at intermediate level in mature leaves and at low levels in flowers and fruits.

It catalyses the reaction phloretin + UDP-alpha-D-glucose = trilobatin + UDP + H(+). The enzyme catalyses (2S)-naringenin + UDP-alpha-D-glucose = (2S)-naringenin 7-O-beta-D-glucoside + UDP + H(+). Its function is as follows. Glycosyltransferase that possesses phloretin 4'-O-glycosyltransferase activity. Converts phloretin to trilobatin (phloretin 4'-O-glucoside), a potential antioxidant. Can convert with low efficiency phlorizin and trilobatin to their corresponding di-O-glucosides. Can convert with low efficiency naringenin to naringenin-7-O-glucoside. Can convert with low efficiency quercetin to quercetin-7-O-glucoside. The chain is Phloretin 4'-O-glucosyltransferase from Malus domestica (Apple).